The following is a 155-amino-acid chain: Ribosomal RNA large subunit methyltransferase H (155 aa).

S-adenosyl-L-methionine-binding positions include L72, G103, and 122–127 (LSALTL).

The protein belongs to the RNA methyltransferase RlmH family. As to quaternary structure, homodimer.

It is found in the cytoplasm. The enzyme catalyses pseudouridine(1915) in 23S rRNA + S-adenosyl-L-methionine = N(3)-methylpseudouridine(1915) in 23S rRNA + S-adenosyl-L-homocysteine + H(+). Its function is as follows. Specifically methylates the pseudouridine at position 1915 (m3Psi1915) in 23S rRNA. This is Ribosomal RNA large subunit methyltransferase H from Escherichia fergusonii (strain ATCC 35469 / DSM 13698 / CCUG 18766 / IAM 14443 / JCM 21226 / LMG 7866 / NBRC 102419 / NCTC 12128 / CDC 0568-73).